The following is a 301-amino-acid chain: Porphobilinogen deaminase (301 aa).

An S-(dipyrrolylmethanemethyl)cysteine modification is found at cysteine 242.

This sequence belongs to the HMBS family. As to quaternary structure, monomer. The cofactor is dipyrromethane.

The catalysed reaction is 4 porphobilinogen + H2O = hydroxymethylbilane + 4 NH4(+). The protein operates within porphyrin-containing compound metabolism; protoporphyrin-IX biosynthesis; coproporphyrinogen-III from 5-aminolevulinate: step 2/4. Functionally, tetrapolymerization of the monopyrrole PBG into the hydroxymethylbilane pre-uroporphyrinogen in several discrete steps. This is Porphobilinogen deaminase from Rickettsia akari (strain Hartford).